The following is a 635-amino-acid chain: Extracellular metalloproteinase 1 (635 aa).

A signal peptide spans 1–19 (MHGLLLAAGLLSLPLHVLA). The propeptide occupies 20 to 246 (HPQPSTSTSL…VHNVVDYVAH (227 aa)). A glycan (N-linked (GlcNAc...) asparagine) is linked at N287. H430 provides a ligand contact to Zn(2+). E431 is a catalytic residue. Residue H434 coordinates Zn(2+). N-linked (GlcNAc...) asparagine glycosylation is found at N475, N594, and N623.

Belongs to the peptidase M36 family. The cofactor is Zn(2+).

The protein resides in the secreted. Secreted metalloproteinase probably acting as a virulence factor. The chain is Extracellular metalloproteinase 1 (MEP1) from Arthroderma benhamiae (Trichophyton mentagrophytes).